A 220-amino-acid polypeptide reads, in one-letter code: NADH-quinone oxidoreductase subunit I (220 aa).

2 4Fe-4S ferredoxin-type domains span residues 71–102 (LQRL…IITH) and 112–141 (DSYT…MGNR). Cys82, Cys85, Cys88, Cys92, Cys121, Cys124, Cys127, and Cys131 together coordinate [4Fe-4S] cluster. Residues 187 to 220 (MQATPLDYVQEPSKEESKEETPTNPESNKGDENV) form a disordered region. Basic and acidic residues predominate over residues 198–207 (PSKEESKEET).

This sequence belongs to the complex I 23 kDa subunit family. In terms of assembly, NDH-1 is composed of 14 different subunits. Subunits NuoA, H, J, K, L, M, N constitute the membrane sector of the complex. It depends on [4Fe-4S] cluster as a cofactor.

It is found in the cell inner membrane. It catalyses the reaction a quinone + NADH + 5 H(+)(in) = a quinol + NAD(+) + 4 H(+)(out). In terms of biological role, NDH-1 shuttles electrons from NADH, via FMN and iron-sulfur (Fe-S) centers, to quinones in the respiratory chain. The immediate electron acceptor for the enzyme in this species is believed to be ubiquinone. Couples the redox reaction to proton translocation (for every two electrons transferred, four hydrogen ions are translocated across the cytoplasmic membrane), and thus conserves the redox energy in a proton gradient. This Helicobacter pylori (strain HPAG1) protein is NADH-quinone oxidoreductase subunit I.